Consider the following 137-residue polypeptide: Bet1-like protein At4g14600 (137 aa).

Over 1-113 (MASNPHRSGA…MSIIRSGNNH (113 aa)) the chain is Cytoplasmic. The region spanning 43 to 105 (DPMHSDLDDE…KNNIRKLNMS (63 aa)) is the t-SNARE coiled-coil homology domain. A helical; Anchor for type IV membrane protein transmembrane segment spans residues 114–134 (IMHVVLFALLVFFVLYIWSKM). The Vesicular portion of the chain corresponds to 135 to 137 (FKR).

It belongs to the BET1 family.

It localises to the golgi apparatus membrane. It is found in the endoplasmic reticulum membrane. In terms of biological role, required for vesicular transport from the ER to the Golgi complex. Functions as a SNARE associated with ER-derived vesicles. The polypeptide is Bet1-like protein At4g14600 (Arabidopsis thaliana (Mouse-ear cress)).